The following is a 569-amino-acid chain: RNA demethylase ALKBH10B (569 aa).

Residues 118 to 151 (QKVAAKKAEDLKQKKTEEEAEEDLKEVVATEEEE) are a coiled coil. Residues 164-190 (ENDVNGDVEDVEDDSPTSDITDSGSHQ) are disordered. A compositionally biased stretch (acidic residues) spans 167 to 179 (VNGDVEDVEDDSP). Positions 180-189 (TSDITDSGSH) are enriched in polar residues. Fe cation-binding residues include His-366, Glu-368, and His-421. A 2-oxoglutarate-binding site is contributed by Arg-430. The span at 531–545 (KHVKHLPPRAQKKRL) shows a compositional bias: basic residues. Residues 531–569 (KHVKHLPPRAQKKRLLPLPPAASSSPAGGSTSEPVITVG) are disordered. The span at 551–560 (AASSSPAGGS) shows a compositional bias: low complexity.

It belongs to the alkB family. Requires Fe(2+) as cofactor.

It carries out the reaction an N(6)-methyladenosine in mRNA + 2-oxoglutarate + O2 = an adenosine in mRNA + formaldehyde + succinate + CO2. Dioxygenase that demethylates RNA by oxidative demethylation: specifically demethylates N(6)-methyladenosine (m6A) RNA, the most prevalent internal modification of messenger RNA (mRNA) in higher eukaryotes. ALKBH10B-mediated mRNA m6A demethylation stabilizes the mRNA of the key flowering time regulators FT, SPL3 and SPL9, which are involved in the control of floral transition. In Arabidopsis thaliana (Mouse-ear cress), this protein is RNA demethylase ALKBH10B.